The following is a 274-amino-acid chain: Type II restriction enzyme HgiEI (274 aa).

Belongs to the TdeIII type II restriction endonuclease family.

The catalysed reaction is Endonucleolytic cleavage of DNA to give specific double-stranded fragments with terminal 5'-phosphates.. In terms of biological role, a P subtype restriction enzyme that recognizes the double-stranded sequence 5'-GGWCC-3' and cleaves after G-1. This system is more active than isoschizomeric RM.HgiBI. This Herpetosiphon aurantiacus (Herpetosiphon giganteus) protein is Type II restriction enzyme HgiEI.